We begin with the raw amino-acid sequence, 264 residues long: Sexual differentiation protein ste4 (264 aa).

Residues 11–73 form the SAM domain; it reads WNNEAVCNWI…LSAIQSMKKQ (63 aa). The tract at residues 111-139 is leucine-zipper; it reads LEKRVEYLETENTKLVKTLNSLNSEFLQL. One can recognise a Ras-associating domain in the interval 176 to 264; that stretch reads GSFDLEVNDS…PSFVLSRRSC (89 aa).

Homodimer or heterodimer with another leucine-zipper protein.

Its function is as follows. Essential for mating and meiosis. The protein is Sexual differentiation protein ste4 (ste4) of Schizosaccharomyces pombe (strain 972 / ATCC 24843) (Fission yeast).